The primary structure comprises 444 residues: Glutamate--tRNA ligase (444 aa).

Residues 12-22 (PSPTGFLHVGG) carry the 'HIGH' region motif. The short motif at 213–217 (KMSKR) is the 'KMSKS' region element. Residue Lys-216 participates in ATP binding.

The protein belongs to the class-I aminoacyl-tRNA synthetase family. Glutamate--tRNA ligase type 1 subfamily. As to quaternary structure, monomer.

It localises to the cytoplasm. The catalysed reaction is tRNA(Glu) + L-glutamate + ATP = L-glutamyl-tRNA(Glu) + AMP + diphosphate. In terms of biological role, catalyzes the attachment of glutamate to tRNA(Glu) in a two-step reaction: glutamate is first activated by ATP to form Glu-AMP and then transferred to the acceptor end of tRNA(Glu). The chain is Glutamate--tRNA ligase from Methylacidiphilum infernorum (isolate V4) (Methylokorus infernorum (strain V4)).